A 363-amino-acid polypeptide reads, in one-letter code: Aminomethyltransferase (363 aa).

Belongs to the GcvT family. The glycine cleavage system is composed of four proteins: P, T, L and H.

It carries out the reaction N(6)-[(R)-S(8)-aminomethyldihydrolipoyl]-L-lysyl-[protein] + (6S)-5,6,7,8-tetrahydrofolate = N(6)-[(R)-dihydrolipoyl]-L-lysyl-[protein] + (6R)-5,10-methylene-5,6,7,8-tetrahydrofolate + NH4(+). The glycine cleavage system catalyzes the degradation of glycine. In Staphylococcus aureus (strain bovine RF122 / ET3-1), this protein is Aminomethyltransferase.